The sequence spans 673 residues: Acetate--CoA ligase [ADP-forming] II (673 aa).

Positions 9-45 (KALLEKYGIKTAKCIFCETEEQAVKAAKEIGFPVVMK) constitute an ATP-grasp domain. 35–46 (AKEIGFPVVMKV) provides a ligand contact to ATP.

It in the N-terminal section; belongs to the acetate CoA ligase beta subunit family. In the C-terminal section; belongs to the acetate CoA ligase alpha subunit family. In terms of assembly, homodimer.

The catalysed reaction is acetate + ATP + CoA = acetyl-CoA + ADP + phosphate. Activity requires divalent metal cations. Functionally, catalyzes the reversible conversion of a variety of acids to the corresponding acyl-CoA esters. Shows the highest activity with the aryl acids, indoleacetate and phenylacetate, as compared to acetate. In the reverse direction, phenylacetyl-CoA is the best substrate. Seems to be involved primarily in the degradation of aryl-CoA esters to the corresponding acids. Participates in the degradation of branched-chain amino acids via branched-chain-acyl-CoA esters. The protein is Acetate--CoA ligase [ADP-forming] II of Archaeoglobus fulgidus (strain ATCC 49558 / DSM 4304 / JCM 9628 / NBRC 100126 / VC-16).